Consider the following 899-residue polypeptide: Translation initiation factor IF-2 (899 aa).

Disordered stretches follow at residues 65 to 84 (KTRS…SVQI) and 91 to 310 (TYVK…SFNK). Polar residues predominate over residues 68-82 (STLNVPSTGGKSKSV). The segment covering 108-164 (QARREAEEQAQRAAEEQAKREAELREAAEKAKRAADEQAKREAAEKAKRDVAEKEKV) has biased composition (basic and acidic residues). Polar residues predominate over residues 165–174 (TNQQNENMTK). Residues 177-236 (QAEKAKREAEAAELKRKAEEAARLKVEEEARRIAEEARRMAEENAGRWEAESAKPEESAD) show a composition bias toward basic and acidic residues. Residues 262-276 (SRSRAGKVTKQKKGN) show a composition bias toward basic residues. The segment covering 277-290 (RQSESKADREEARA) has biased composition (basic and acidic residues). In terms of domain architecture, tr-type G spans 398 to 567 (ARAPVVTIMG…LLQAEVLELK (170 aa)). The tract at residues 407 to 414 (GHVDHGKT) is G1. Residue 407–414 (GHVDHGKT) coordinates GTP. A G2 region spans residues 432–436 (GITQH). A G3 region spans residues 453-456 (DTPG). GTP is bound by residues 453–457 (DTPGH) and 507–510 (NKID). Positions 507–510 (NKID) are G4. Residues 543-545 (SAK) form a G5 region.

Belongs to the TRAFAC class translation factor GTPase superfamily. Classic translation factor GTPase family. IF-2 subfamily.

It localises to the cytoplasm. In terms of biological role, one of the essential components for the initiation of protein synthesis. Protects formylmethionyl-tRNA from spontaneous hydrolysis and promotes its binding to the 30S ribosomal subunits. Also involved in the hydrolysis of GTP during the formation of the 70S ribosomal complex. The chain is Translation initiation factor IF-2 from Pectobacterium carotovorum subsp. carotovorum (strain PC1).